A 489-amino-acid chain; its full sequence is UDP-N-acetylmuramoylalanine--D-glutamate ligase (489 aa).

126 to 132 is an ATP binding site; it reads GTNGKTT.

This sequence belongs to the MurCDEF family.

It is found in the cytoplasm. The enzyme catalyses UDP-N-acetyl-alpha-D-muramoyl-L-alanine + D-glutamate + ATP = UDP-N-acetyl-alpha-D-muramoyl-L-alanyl-D-glutamate + ADP + phosphate + H(+). It functions in the pathway cell wall biogenesis; peptidoglycan biosynthesis. In terms of biological role, cell wall formation. Catalyzes the addition of glutamate to the nucleotide precursor UDP-N-acetylmuramoyl-L-alanine (UMA). The protein is UDP-N-acetylmuramoylalanine--D-glutamate ligase of Mycolicibacterium paratuberculosis (strain ATCC BAA-968 / K-10) (Mycobacterium paratuberculosis).